An 89-amino-acid polypeptide reads, in one-letter code: UPF0223 protein BAMEG_4214 (89 aa).

This sequence belongs to the UPF0223 family.

In Bacillus anthracis (strain CDC 684 / NRRL 3495), this protein is UPF0223 protein BAMEG_4214.